A 338-amino-acid polypeptide reads, in one-letter code: Transcription factor AP-4 (338 aa).

One can recognise a bHLH domain in the interval 48 to 99; the sequence is IRREIANSNERRRMQSINAGFQSLKTLIPHTDGEKLSKAAILQQTAEYIFSL. Positions 100-120 are leucine-zipper 1; the sequence is EQEKTRLLQQNTQLKRFIQEL. The segment at 118-141 is disordered; it reads QELSGSSPKRRRAEDKDEGIGSPD. Phosphoserine is present on residues Ser123, Ser124, and Ser139. Lys147 is covalently cross-linked (Glycyl lysine isopeptide (Lys-Gly) (interchain with G-Cter in SUMO2)). The segment at 151–179 is leucine-zipper 2; it reads LRREMIELRQQLDKERSVRMMLEEQVRSL. Glycyl lysine isopeptide (Lys-Gly) (interchain with G-Cter in SUMO2) cross-links involve residues Lys187, Lys189, and Lys285. Residues 283–294 are compositionally biased toward basic and acidic residues; it reads QEKQELEEEQRR. Positions 283 to 338 are disordered; sequence QEKQELEEEQRRAVIVKPVRSCPEAPTSDTASDSEASDSDAMDQSREEPSGDGELP.

In terms of assembly, efficient DNA binding requires dimerization with another bHLH protein. Homodimer.

Its subcellular location is the nucleus. Functionally, transcription factor that activates both viral and cellular genes by binding to the symmetrical DNA sequence 5'-CAGCTG-3'. The chain is Transcription factor AP-4 (TFAP4) from Homo sapiens (Human).